A 125-amino-acid chain; its full sequence is Phosphoribosyl-AMP cyclohydrolase (125 aa).

Asp86 is a Mg(2+) binding site. Cys87 lines the Zn(2+) pocket. The Mg(2+) site is built by Asp88 and Asp90. Residues Cys103 and Cys110 each coordinate Zn(2+).

This sequence belongs to the PRA-CH family. Homodimer. Mg(2+) is required as a cofactor. Requires Zn(2+) as cofactor.

The protein localises to the cytoplasm. It carries out the reaction 1-(5-phospho-beta-D-ribosyl)-5'-AMP + H2O = 1-(5-phospho-beta-D-ribosyl)-5-[(5-phospho-beta-D-ribosylamino)methylideneamino]imidazole-4-carboxamide. It participates in amino-acid biosynthesis; L-histidine biosynthesis; L-histidine from 5-phospho-alpha-D-ribose 1-diphosphate: step 3/9. Catalyzes the hydrolysis of the adenine ring of phosphoribosyl-AMP. This chain is Phosphoribosyl-AMP cyclohydrolase, found in Erythrobacter litoralis (strain HTCC2594).